Consider the following 156-residue polypeptide: Small ribosomal subunit protein uS7 (156 aa).

Belongs to the universal ribosomal protein uS7 family. In terms of assembly, part of the 30S ribosomal subunit. Contacts proteins S9 and S11.

Its function is as follows. One of the primary rRNA binding proteins, it binds directly to 16S rRNA where it nucleates assembly of the head domain of the 30S subunit. Is located at the subunit interface close to the decoding center, probably blocks exit of the E-site tRNA. The sequence is that of Small ribosomal subunit protein uS7 from Tropheryma whipplei (strain TW08/27) (Whipple's bacillus).